A 358-amino-acid polypeptide reads, in one-letter code: Probable dual-specificity RNA methyltransferase RlmN 1 (358 aa).

Residues 101 to 326 (MQAGGTLCIS…REKGFYTLLR (226 aa)) enclose the Radical SAM core domain. C108 and C337 form a disulfide bridge. The [4Fe-4S] cluster site is built by C115, C119, and C122. S-adenosyl-L-methionine-binding positions include 162 to 163 (GE), S194, 218 to 220 (SLN), and N294. The S-methylcysteine intermediate role is filled by C337.

The protein belongs to the radical SAM superfamily. RlmN family. The cofactor is [4Fe-4S] cluster.

The protein resides in the cytoplasm. The enzyme catalyses adenosine(2503) in 23S rRNA + 2 reduced [2Fe-2S]-[ferredoxin] + 2 S-adenosyl-L-methionine = 2-methyladenosine(2503) in 23S rRNA + 5'-deoxyadenosine + L-methionine + 2 oxidized [2Fe-2S]-[ferredoxin] + S-adenosyl-L-homocysteine. It carries out the reaction adenosine(37) in tRNA + 2 reduced [2Fe-2S]-[ferredoxin] + 2 S-adenosyl-L-methionine = 2-methyladenosine(37) in tRNA + 5'-deoxyadenosine + L-methionine + 2 oxidized [2Fe-2S]-[ferredoxin] + S-adenosyl-L-homocysteine. Its function is as follows. Specifically methylates position 2 of adenine 2503 in 23S rRNA and position 2 of adenine 37 in tRNAs. This Protochlamydia amoebophila (strain UWE25) protein is Probable dual-specificity RNA methyltransferase RlmN 1.